A 938-amino-acid chain; its full sequence is Scm-like with four MBT domains protein 2 (938 aa).

Residues 1–32 form a disordered region; the sequence is MERYLPVSKKRNSSSSLEKITGSANGNGTLYS. A compositionally biased stretch (polar residues) spans 13 to 30; it reads SSSSLEKITGSANGNGTL. MBT repeat units follow at residues 43-143, 151-255, 265-371, and 379-475; these read FSWG…LRPP, SDWT…MDPP, FEWK…LAPP, and FNWV…LTTP. The interval 742–836 is disordered; that stretch reads PEGIPESLPE…TVPTTASSNN (95 aa). Composition is skewed to basic and acidic residues over residues 765 to 777 and 809 to 822; these read TEQE…DTAR and RNSE…VERA. Residues 868–931 form the SAM domain; that stretch reads WSVTDVVRFI…CHQIERVKVA (64 aa).

In terms of assembly, interacts with YY1. Interacts with methylated histones H3K9me2 and H4K20me2. In terms of tissue distribution, expressed in testis and, at much lower levels, in ovary.

It is found in the nucleus. Transcriptional repressor of HOXB13 gene. This chain is Scm-like with four MBT domains protein 2 (Sfmbt2), found in Mus musculus (Mouse).